We begin with the raw amino-acid sequence, 542 residues long: MARYIFITGGVVSSLGKGLASAALGALLQARGYKVRLRKLDPYLNLDPGTMSPYQHGEVFVTDDGAETDLDLGHYERFTGRPATRQDNITTGRIYQDILTKERRGDYLGATIQVIPHVTNAIKDFILDGNDGYDFVLCEIGGTVGDIEGLPFFEAIRQIKNDLPRGHAVYVHLTLLPFIPSAGELKTKPTQHSVKELRSIGIQPDILLCRTDRTIPAEERRKLGLFCNVRESAVIEARDADNIYAVPEVYHAAGLDDEVLAAFGLEAPAPDLRSWHEINARVHNPEGQVTIAIVGKYTGMKDAYKSLIEALSHGGIANKVKVKLDWIESEVFENEDAAPFLEHVDGILVPGGFGQRGAEGKIKAAQFARERHVPYFGICFGMQMAVIEAARNLVGIPSANSTEFGPTSEPLVGLMTEWLRGNELEKRSRAGDLGGTMRLGAYPAALKRGSRVSGIYGGALEISERHRHRYEVNTAYKDRLEQHGLRFSGLSPDGVLPEIVEYEDHPWFIGVQYHPELKSRPFEPHPLFASFIQAAVVQSRLV.

Residues 1-265 (MARYIFITGG…DDEVLAAFGL (265 aa)) are amidoligase domain. Ser13 provides a ligand contact to CTP. Ser13 lines the UTP pocket. Position 14–19 (14–19 (SLGKGL)) interacts with ATP. Residue Tyr54 coordinates L-glutamine. An ATP-binding site is contributed by Asp71. Mg(2+)-binding residues include Asp71 and Glu139. Residues 146–148 (DIE), 186–191 (KTKPTQ), and Lys222 each bind CTP. Residues 186-191 (KTKPTQ) and Lys222 each bind UTP. Residue 238-240 (RDA) coordinates ATP. In terms of domain architecture, Glutamine amidotransferase type-1 spans 290–541 (TIAIVGKYTG…IQAAVVQSRL (252 aa)). Gly352 lines the L-glutamine pocket. Cys379 serves as the catalytic Nucleophile; for glutamine hydrolysis. L-glutamine is bound by residues 380–383 (FGMQ), Glu403, and Arg469. Active-site residues include His514 and Glu516.

It belongs to the CTP synthase family. Homotetramer.

It carries out the reaction UTP + L-glutamine + ATP + H2O = CTP + L-glutamate + ADP + phosphate + 2 H(+). It catalyses the reaction L-glutamine + H2O = L-glutamate + NH4(+). The enzyme catalyses UTP + NH4(+) + ATP = CTP + ADP + phosphate + 2 H(+). It functions in the pathway pyrimidine metabolism; CTP biosynthesis via de novo pathway; CTP from UDP: step 2/2. Allosterically activated by GTP, when glutamine is the substrate; GTP has no effect on the reaction when ammonia is the substrate. The allosteric effector GTP functions by stabilizing the protein conformation that binds the tetrahedral intermediate(s) formed during glutamine hydrolysis. Inhibited by the product CTP, via allosteric rather than competitive inhibition. Its function is as follows. Catalyzes the ATP-dependent amination of UTP to CTP with either L-glutamine or ammonia as the source of nitrogen. Regulates intracellular CTP levels through interactions with the four ribonucleotide triphosphates. The protein is CTP synthase of Nitrobacter hamburgensis (strain DSM 10229 / NCIMB 13809 / X14).